A 92-amino-acid polypeptide reads, in one-letter code: CRISPR-associated endoribonuclease Cas2 1 (92 aa).

A Mg(2+)-binding site is contributed by Asp10.

This sequence belongs to the CRISPR-associated endoribonuclease Cas2 protein family. In terms of assembly, homodimer, forms a heterotetramer with a Cas1 homodimer. Mg(2+) serves as cofactor.

Its function is as follows. CRISPR (clustered regularly interspaced short palindromic repeat), is an adaptive immune system that provides protection against mobile genetic elements (viruses, transposable elements and conjugative plasmids). CRISPR clusters contain sequences complementary to antecedent mobile elements and target invading nucleic acids. CRISPR clusters are transcribed and processed into CRISPR RNA (crRNA). Functions as a ssRNA-specific endoribonuclease. Involved in the integration of spacer DNA into the CRISPR cassette. This Thermodesulfovibrio yellowstonii (strain ATCC 51303 / DSM 11347 / YP87) protein is CRISPR-associated endoribonuclease Cas2 1.